The primary structure comprises 91 residues: Cell division topological specificity factor (91 aa).

Belongs to the MinE family.

Its function is as follows. Prevents the cell division inhibition by proteins MinC and MinD at internal division sites while permitting inhibition at polar sites. This ensures cell division at the proper site by restricting the formation of a division septum at the midpoint of the long axis of the cell. The protein is Cell division topological specificity factor of Bradyrhizobium sp. (strain BTAi1 / ATCC BAA-1182).